The sequence spans 298 residues: Glutamyl-Q tRNA(Asp) synthetase (298 aa).

L-glutamate contacts are provided by residues 8-12 (RFAPS) and Glu-44. Residues 11 to 21 (PSPTGPLHFGS) carry the 'HIGH' region motif. Zn(2+)-binding residues include Cys-100, Cys-102, Tyr-123, and Cys-127. L-glutamate contacts are provided by Tyr-183 and Arg-201. A 'KMSKS' region motif is present at residues 239–243 (KLSKQ). Lys-242 provides a ligand contact to ATP.

It belongs to the class-I aminoacyl-tRNA synthetase family. GluQ subfamily. Zn(2+) serves as cofactor.

Functionally, catalyzes the tRNA-independent activation of glutamate in presence of ATP and the subsequent transfer of glutamate onto a tRNA(Asp). Glutamate is transferred on the 2-amino-5-(4,5-dihydroxy-2-cyclopenten-1-yl) moiety of the queuosine in the wobble position of the QUC anticodon. The chain is Glutamyl-Q tRNA(Asp) synthetase from Burkholderia cenocepacia (strain ATCC BAA-245 / DSM 16553 / LMG 16656 / NCTC 13227 / J2315 / CF5610) (Burkholderia cepacia (strain J2315)).